Here is a 450-residue protein sequence, read N- to C-terminus: Phosphoglucosamine mutase (450 aa).

The active-site Phosphoserine intermediate is Ser102. Residues Ser102, Asp244, Asp246, and Asp248 each coordinate Mg(2+). Ser102 carries the phosphoserine modification.

It belongs to the phosphohexose mutase family. Mg(2+) serves as cofactor. Post-translationally, activated by phosphorylation.

The catalysed reaction is alpha-D-glucosamine 1-phosphate = D-glucosamine 6-phosphate. Its function is as follows. Catalyzes the conversion of glucosamine-6-phosphate to glucosamine-1-phosphate. The polypeptide is Phosphoglucosamine mutase (Solidesulfovibrio magneticus (strain ATCC 700980 / DSM 13731 / RS-1) (Desulfovibrio magneticus)).